The chain runs to 123 residues: Large ribosomal subunit protein bL12 (123 aa).

Belongs to the bacterial ribosomal protein bL12 family. As to quaternary structure, homodimer. Part of the ribosomal stalk of the 50S ribosomal subunit. Forms a multimeric L10(L12)X complex, where L10 forms an elongated spine to which 2 to 4 L12 dimers bind in a sequential fashion. Binds GTP-bound translation factors.

Functionally, forms part of the ribosomal stalk which helps the ribosome interact with GTP-bound translation factors. Is thus essential for accurate translation. The chain is Large ribosomal subunit protein bL12 from Salmonella arizonae (strain ATCC BAA-731 / CDC346-86 / RSK2980).